A 365-amino-acid polypeptide reads, in one-letter code: Baculoviral IAP repeat-containing protein 7 (365 aa).

2 BIR repeats span residues Arg7–Gln73 and Arg115–Leu180. 4 residues coordinate Zn(2+): Cys149, Cys152, His169, and Cys176. The self-inhibits the anti-apoptotic function stretch occupies residues Ala186–Ala234. The residue at position 198 (Ser198) is a Phosphoserine. Ser202 carries the post-translational modification Phosphoserine; by MAPK1. Ser212 is modified (phosphoserine). 2 positions are modified to phosphoserine; by MAPK1: Ser216 and Ser219. The interval Thr278 to Glu306 is disordered. Residues Thr288 to Lys297 show a composition bias toward basic and acidic residues. The segment at Cys318 to Arg353 adopts an RING-type zinc-finger fold.

Belongs to the IAP family. In terms of processing, auto-ubiquitinated, and degraded in a 2-step mechanism; a caspase-independent first step and a caspase-dependent second step. Post-translationally, phosphorylated via MAPK-dependent and CDK-dependent pathways during oocyte maturation. Phosphorylation does not appear to affect caspase inhibition or autoubiquitination activity.

It is found in the cytoplasm. The catalysed reaction is S-ubiquitinyl-[E2 ubiquitin-conjugating enzyme]-L-cysteine + [acceptor protein]-L-lysine = [E2 ubiquitin-conjugating enzyme]-L-cysteine + N(6)-ubiquitinyl-[acceptor protein]-L-lysine.. Its function is as follows. Weak apoptotic suppressor. Has E3 ubiquitin-protein ligase activity. Weak inhibitor of caspase activity. In Xenopus tropicalis (Western clawed frog), this protein is Baculoviral IAP repeat-containing protein 7 (birc7).